The primary structure comprises 224 residues: MRSPCAALSASLLLLLLLLWARSSVGCNKALCASDVSKCLIQELCQCRPGEGNCSCCKECMLCLGTLWDECCDCVGMCNPRNYSDTPPTSKSTVEELHEPIPSLFRALTEGDTQLNWNIVSFPVAEELSHHENLVSFLETVNQPQHQNVSVPSNNIHAPYSSDKEHMCTVVYFDDCMSIHQCKISCESMGASKYRWFHNACCECIGPECIDYGSKTVKCMNCMF.

Residues 1 to 26 (MRSPCAALSASLLLLLLLLWARSSVG) form the signal peptide. 3 N-linked (GlcNAc...) asparagine glycosylation sites follow: Asn-53, Asn-82, and Asn-148.

The protein belongs to the twisted gastrulation protein family. Interacts with CHRD and BMP4. This interaction enhances CHRD/BMP4 complex formation. Interacts with BMP7.

It is found in the secreted. May be involved in dorsoventral axis formation. Seems to antagonize BMP signaling by forming ternary complexes with CHRD and BMPs, thereby preventing BMPs from binding to their receptors. In addition to the anti-BMP function, also has pro-BMP activity, partly mediated by cleavage and degradation of CHRD, which releases BMPs from ternary complexes. May be an important modulator of BMP-regulated cartilage development and chondrocyte differentiation. May play a role in thymocyte development. This chain is Twisted gastrulation protein homolog 1 (TWSG1), found in Gallus gallus (Chicken).